We begin with the raw amino-acid sequence, 440 residues long: 3-phosphoshikimate 1-carboxyvinyltransferase (440 aa).

The 3-phosphoshikimate site is built by K28, S29, and R33. K28 contacts phosphoenolpyruvate. 2 residues coordinate phosphoenolpyruvate: G98 and R126. The 3-phosphoshikimate site is built by S171, Q173, D318, and K345. Q173 contacts phosphoenolpyruvate. Catalysis depends on D318, which acts as the Proton acceptor. Residues R349 and R391 each coordinate phosphoenolpyruvate.

The protein belongs to the EPSP synthase family. Monomer.

It is found in the cytoplasm. The catalysed reaction is 3-phosphoshikimate + phosphoenolpyruvate = 5-O-(1-carboxyvinyl)-3-phosphoshikimate + phosphate. Its pathway is metabolic intermediate biosynthesis; chorismate biosynthesis; chorismate from D-erythrose 4-phosphate and phosphoenolpyruvate: step 6/7. Catalyzes the transfer of the enolpyruvyl moiety of phosphoenolpyruvate (PEP) to the 5-hydroxyl of shikimate-3-phosphate (S3P) to produce enolpyruvyl shikimate-3-phosphate and inorganic phosphate. This chain is 3-phosphoshikimate 1-carboxyvinyltransferase, found in Anaeromyxobacter dehalogenans (strain 2CP-C).